The chain runs to 580 residues: Threonine--tRNA ligase (580 aa).

The interval 179-476 (DHRKIGKDLN…LLEQTKGILP (298 aa)) is catalytic. Residues C272, H323, and H453 each coordinate Zn(2+).

This sequence belongs to the class-II aminoacyl-tRNA synthetase family. As to quaternary structure, homodimer. Requires Zn(2+) as cofactor.

Its subcellular location is the cytoplasm. It catalyses the reaction tRNA(Thr) + L-threonine + ATP = L-threonyl-tRNA(Thr) + AMP + diphosphate + H(+). Functionally, catalyzes the attachment of threonine to tRNA(Thr) in a two-step reaction: L-threonine is first activated by ATP to form Thr-AMP and then transferred to the acceptor end of tRNA(Thr). Also edits incorrectly charged L-seryl-tRNA(Thr). This is Threonine--tRNA ligase from Ureaplasma parvum serovar 3 (strain ATCC 27815 / 27 / NCTC 11736).